A 184-amino-acid chain; its full sequence is Probable RNA 2'-phosphotransferase (184 aa).

Belongs to the KptA/TPT1 family.

In terms of biological role, removes the 2'-phosphate from RNA via an intermediate in which the phosphate is ADP-ribosylated by NAD followed by a presumed transesterification to release the RNA and generate ADP-ribose 1''-2''-cyclic phosphate (APPR&gt;P). May function as an ADP-ribosylase. The protein is Probable RNA 2'-phosphotransferase of Escherichia coli (strain K12 / MC4100 / BW2952).